Here is a 384-residue protein sequence, read N- to C-terminus: Protein RecA (384 aa).

76–83 (GPESSGKT) serves as a coordination point for ATP. Residues 346-365 (QGSAEPEKAAKPEKVEKADK) form a disordered region. Positions 350 to 365 (EPEKAAKPEKVEKADK) are enriched in basic and acidic residues.

The protein belongs to the RecA family.

The protein resides in the cytoplasm. Its function is as follows. Can catalyze the hydrolysis of ATP in the presence of single-stranded DNA, the ATP-dependent uptake of single-stranded DNA by duplex DNA, and the ATP-dependent hybridization of homologous single-stranded DNAs. It interacts with LexA causing its activation and leading to its autocatalytic cleavage. The sequence is that of Protein RecA from Polaromonas naphthalenivorans (strain CJ2).